The following is a 296-amino-acid chain: Protoheme IX farnesyltransferase (296 aa).

The Cytoplasmic portion of the chain corresponds to 1 to 9 (MMFKQYLQV). Residues 10–28 (TKPGIIFGNLISVIGGFLL) traverse the membrane as a helical segment. Topologically, residues 29–37 (ASKGSIDYP) are periplasmic. The helical transmembrane segment at 38–56 (LFIYTLVGVSLVVASGCVF) threads the bilayer. Residues 57 to 78 (NNYIDRDIDRKMERTKNRVLVK) are Cytoplasmic-facing. A helical membrane pass occupies residues 79–97 (GLISPGVSLVYATLLGIAG). Residues 98–107 (FMLLWFGANP) are Periplasmic-facing. The chain crosses the membrane as a helical span at residues 108 to 126 (LACWLGVMGFVVYVGVYSL). At 127-197 (YMKRHSVYGT…YQAANIPVLP (71 aa)) the chain is on the cytoplasmic side. A helical membrane pass occupies residues 198-216 (VVKGISVAKNHITLYIIAF). At 217–228 (AVATLMLTLGGY) the chain is on the periplasmic side. The chain crosses the membrane as a helical span at residues 229 to 247 (AGYKYLVVAAAVSVWWLGM). The Cytoplasmic segment spans residues 248 to 268 (ALRGYKVEDDKVWARKLFGFS). The helical transmembrane segment at 269–287 (IIAITALSIMMSVDFMVPN) threads the bilayer. The Periplasmic segment spans residues 288–296 (SQNLLTYVW).

The protein belongs to the UbiA prenyltransferase family. Protoheme IX farnesyltransferase subfamily.

It localises to the cell inner membrane. It catalyses the reaction heme b + (2E,6E)-farnesyl diphosphate + H2O = Fe(II)-heme o + diphosphate. It participates in porphyrin-containing compound metabolism; heme O biosynthesis; heme O from protoheme: step 1/1. Converts heme B (protoheme IX) to heme O by substitution of the vinyl group on carbon 2 of heme B porphyrin ring with a hydroxyethyl farnesyl side group. The sequence is that of Protoheme IX farnesyltransferase from Salmonella typhimurium (strain LT2 / SGSC1412 / ATCC 700720).